Here is an 810-residue protein sequence, read N- to C-terminus: Plasminogen (810 aa).

The N-terminal stretch at 1 to 19 (MQRKELVLLFLLFLQPGHG) is a signal peptide. Positions 20-98 (IPLDDYVTTQ…RDVILFEKKM (79 aa)) constitute a PAN domain. Cystine bridges form between cysteine 49–cysteine 73, cysteine 53–cysteine 61, cysteine 103–cysteine 181, cysteine 124–cysteine 164, cysteine 152–cysteine 176, cysteine 185–cysteine 262, cysteine 188–cysteine 316, cysteine 206–cysteine 245, cysteine 234–cysteine 257, cysteine 275–cysteine 352, cysteine 296–cysteine 335, cysteine 324–cysteine 347, cysteine 379–cysteine 456, cysteine 400–cysteine 439, cysteine 428–cysteine 451, cysteine 482–cysteine 561, cysteine 503–cysteine 544, cysteine 532–cysteine 556, cysteine 569–cysteine 685, cysteine 579–cysteine 586, cysteine 607–cysteine 623, cysteine 699–cysteine 766, cysteine 729–cysteine 745, and cysteine 756–cysteine 784. Kringle domains are found at residues 103–181 (CKVG…IIQC), 185–262 (CMHC…IPRC), 275–352 (CLMG…IPDC), 379–456 (CYQG…LKKC), and 482–561 (CIID…IPHC). Asparagine 339 carries N-linked (GlcNAc...) asparagine glycosylation. Residues 398–418 (KKCQPWTSMRPHRHSKTPENY) form a disordered region. The 227-residue stretch at 582–808 (RVGGCVAHPH…YVSWLQDVMR (227 aa)) folds into the Peptidase S1 domain. The residue at position 598 (serine 598) is a Phosphoserine. Residues histidine 622 and aspartate 665 each act as charge relay system in the active site. Serine 760 (charge relay system) is an active-site residue.

The protein belongs to the peptidase S1 family. Plasminogen subfamily. In terms of assembly, interacts with CSPG4 and AMOT. Interacts (via the Kringle domains) with HRG; the interaction tethers PLG to the cell surface and enhances its activation. Interacts (via Kringle 4 domain) with ADA; the interaction stimulates PLG activation when in complex with DPP4. Angiostatin: Interacts with ATP5F1A; the interaction inhibits most of the angiogenic effects of angiostatin. In terms of processing, in the presence of the inhibitor, the activation involves only cleavage after Arg-582, yielding two chains held together by two disulfide bonds. In the absence of the inhibitor, the activation involves additionally the removal of the activation peptide.

It is found in the secreted. It carries out the reaction Preferential cleavage: Lys-|-Xaa &gt; Arg-|-Xaa, higher selectivity than trypsin. Converts fibrin into soluble products.. With respect to regulation, converted into plasmin by plasminogen activators, both plasminogen and its activator being bound to fibrin. Cannot be activated with streptokinase. Plasmin dissolves the fibrin of blood clots and acts as a proteolytic factor in a variety of other processes including embryonic development, tissue remodeling, tumor invasion, and inflammation. In ovulation, weakens the walls of the Graafian follicle. It activates the urokinase-type plasminogen activator, collagenases and several complement zymogens, such as C1, C4 and C5. Cleavage of fibronectin and laminin leads to cell detachment and apoptosis. Also cleaves fibrin, thrombospondin and von Willebrand factor. Its role in tissue remodeling and tumor invasion may be modulated by CSPG4. Binds to cells. In Erinaceus europaeus (Western European hedgehog), this protein is Plasminogen (PLG).